A 389-amino-acid polypeptide reads, in one-letter code: Formate-dependent phosphoribosylglycinamide formyltransferase (389 aa).

Residues 15-16 (EL) and Glu75 contribute to the N(1)-(5-phospho-beta-D-ribosyl)glycinamide site. ATP contacts are provided by residues Arg107, Lys148, 153-158 (SSGKGQ), 188-191 (EEFL), and Glu196. The ATP-grasp domain occupies 112–302 (DLAAGELALR…EFELHLRAVL (191 aa)). Mg(2+) contacts are provided by Glu261 and Glu273. N(1)-(5-phospho-beta-D-ribosyl)glycinamide-binding positions include Asp280, Lys350, and 357–358 (RR).

It belongs to the PurK/PurT family. In terms of assembly, homodimer.

The enzyme catalyses N(1)-(5-phospho-beta-D-ribosyl)glycinamide + formate + ATP = N(2)-formyl-N(1)-(5-phospho-beta-D-ribosyl)glycinamide + ADP + phosphate + H(+). It functions in the pathway purine metabolism; IMP biosynthesis via de novo pathway; N(2)-formyl-N(1)-(5-phospho-D-ribosyl)glycinamide from N(1)-(5-phospho-D-ribosyl)glycinamide (formate route): step 1/1. Functionally, involved in the de novo purine biosynthesis. Catalyzes the transfer of formate to 5-phospho-ribosyl-glycinamide (GAR), producing 5-phospho-ribosyl-N-formylglycinamide (FGAR). Formate is provided by PurU via hydrolysis of 10-formyl-tetrahydrofolate. This is Formate-dependent phosphoribosylglycinamide formyltransferase from Synechococcus sp. (strain WH7803).